A 213-amino-acid polypeptide reads, in one-letter code: NDR1/HIN1-like protein 26 (213 aa).

The Cytoplasmic portion of the chain corresponds to 1 to 27 (MSQISITSPKHCAKKGGININNRHKKL). A helical transmembrane segment spans residues 28–48 (FFTFSTFFSGLLLIIFLVWLI). Over 49-213 (LHPERPEFSL…LQGTRCSTTI (165 aa)) the chain is Lumenal. Asn67, Asn77, and Asn195 each carry an N-linked (GlcNAc...) asparagine glycan.

As to expression, expressed in the vasculature of roots, rosette leaves, stems, cauline leaves and flowers. Specifically expressed in phloem.

It localises to the cell junction. The protein localises to the plasmodesma. It is found in the endoplasmic reticulum membrane. Involved in the regulation of sugar, amino acid and some primary metabolite export from companion cells (CCs) to sieve elements (SEs) in phloem. Required for apoplastic phloem sugar loading in source leaves in order to transport it to sink tissues. Required for correct sugar partitioning between source leaves and sink organs. This chain is NDR1/HIN1-like protein 26, found in Arabidopsis thaliana (Mouse-ear cress).